The chain runs to 188 residues: Large ribosomal subunit protein uL6 (188 aa).

It belongs to the universal ribosomal protein uL6 family. In terms of assembly, part of the 50S ribosomal subunit.

This protein binds to the 23S rRNA, and is important in its secondary structure. It is located near the subunit interface in the base of the L7/L12 stalk, and near the tRNA binding site of the peptidyltransferase center. The protein is Large ribosomal subunit protein uL6 of Myxococcus xanthus (strain DK1622).